The following is a 480-amino-acid chain: RuvB-like helicase 2 (480 aa).

Residue 73–80 (GEPSTGKT) participates in ATP binding.

This sequence belongs to the RuvB family. Forms homohexameric rings. May form a dodecamer with rept made of two stacked hexameric rings. Component of the chromatin remodeling Ino80 complex.

The protein resides in the nucleus. It catalyses the reaction ATP + H2O = ADP + phosphate + H(+). Acts as a transcriptional coactivator in Wg signaling caused by altered arm signaling. Pont and rept interfere antagonistically with nuclear arm signaling function, and are required to enhance or reduce arm activity, respectively. Also an essential cofactor for the normal function of Myc; required for cellular proliferation and growth. Its function is as follows. Proposed core component of the chromatin remodeling Ino80 complex which is involved in transcriptional regulation, DNA replication and probably DNA repair. The sequence is that of RuvB-like helicase 2 from Drosophila pseudoobscura pseudoobscura (Fruit fly).